The chain runs to 199 residues: UPF0301 protein Vapar_4617 (199 aa).

This sequence belongs to the UPF0301 (AlgH) family.

This Variovorax paradoxus (strain S110) protein is UPF0301 protein Vapar_4617.